The chain runs to 431 residues: 5-methylthioadenosine/S-adenosylhomocysteine deaminase (431 aa).

Residues H63 and H65 each coordinate Zn(2+). Substrate contacts are provided by E92, R144, and H184. A Zn(2+)-binding site is contributed by H211. Substrate-binding residues include E214 and D299. D299 is a Zn(2+) binding site.

It belongs to the metallo-dependent hydrolases superfamily. MTA/SAH deaminase family. Requires Zn(2+) as cofactor.

The catalysed reaction is S-adenosyl-L-homocysteine + H2O + H(+) = S-inosyl-L-homocysteine + NH4(+). It carries out the reaction S-methyl-5'-thioadenosine + H2O + H(+) = S-methyl-5'-thioinosine + NH4(+). Catalyzes the deamination of 5-methylthioadenosine and S-adenosyl-L-homocysteine into 5-methylthioinosine and S-inosyl-L-homocysteine, respectively. Is also able to deaminate adenosine. The polypeptide is 5-methylthioadenosine/S-adenosylhomocysteine deaminase (Thermoanaerobacter pseudethanolicus (strain ATCC 33223 / 39E) (Clostridium thermohydrosulfuricum)).